The chain runs to 261 residues: MSKVNDFGFSESNGDEVGITMSTPFLESDNSNTQSISGRIGSNNNSNSKNSGGIGSGGGININGDPYGNSGGGGSKTSNNFGSGTIAFMKGLTHPVAASVHVLFKLSAILLYLFSGLFGGGFILTFILCILLLSFDFYSVKNITGRLLVGLRWWNQVDPKDGSNKWYFETAPEGHRVNQIESLIFWITLYGTPIFWILFFLKCIISLQFAWILIPIIALSLNMANVYGFYKCSNSNVSNAAATFASNYIGRSLLQRASSFM.

A compositionally biased stretch (polar residues) spans 20-34 (TMSTPFLESDNSNTQ). The disordered stretch occupies residues 20–55 (TMSTPFLESDNSNTQSISGRIGSNNNSNSKNSGGIG). Over residues 35-51 (SISGRIGSNNNSNSKNS) the composition is skewed to low complexity. The next 3 helical transmembrane spans lie at 113 to 133 (LFSGLFGGGFILTFILCILLL), 183 to 200 (LIFWITLYGTPIFWILFF), and 204 to 226 (IISLQFAWILIPIIALSLNMANV).

This sequence belongs to the TVP23 family.

It localises to the membrane. This is an uncharacterized protein from Dictyostelium discoideum (Social amoeba).